Here is a 137-residue protein sequence, read N- to C-terminus: Urease subunit beta (137 aa).

The interval 118–137 (IIAEENKVSENANKESGYNR) is disordered. Positions 126 to 137 (SENANKESGYNR) are enriched in polar residues.

Belongs to the urease beta subunit family. In terms of assembly, heterotrimer of UreA (gamma), UreB (beta) and UreC (alpha) subunits. Three heterotrimers associate to form the active enzyme.

Its subcellular location is the cytoplasm. The enzyme catalyses urea + 2 H2O + H(+) = hydrogencarbonate + 2 NH4(+). The protein operates within nitrogen metabolism; urea degradation; CO(2) and NH(3) from urea (urease route): step 1/1. This chain is Urease subunit beta, found in Staphylococcus xylosus.